A 168-amino-acid chain; its full sequence is Endoribonuclease YbeY (168 aa).

Zn(2+) contacts are provided by His-123, His-127, and His-133.

It belongs to the endoribonuclease YbeY family. Zn(2+) is required as a cofactor.

Its subcellular location is the cytoplasm. In terms of biological role, single strand-specific metallo-endoribonuclease involved in late-stage 70S ribosome quality control and in maturation of the 3' terminus of the 16S rRNA. This is Endoribonuclease YbeY from Francisella tularensis subsp. holarctica (strain LVS).